Reading from the N-terminus, the 597-residue chain is Elongation factor 4 (597 aa).

Residues 4-181 (SKIRNFSIIA…EIVDKISYPI (178 aa)) enclose the tr-type G domain. Residues 16–21 (DHGKST) and 128–131 (NKID) contribute to the GTP site.

Belongs to the TRAFAC class translation factor GTPase superfamily. Classic translation factor GTPase family. LepA subfamily.

The protein resides in the cell membrane. The enzyme catalyses GTP + H2O = GDP + phosphate + H(+). Functionally, required for accurate and efficient protein synthesis under certain stress conditions. May act as a fidelity factor of the translation reaction, by catalyzing a one-codon backward translocation of tRNAs on improperly translocated ribosomes. Back-translocation proceeds from a post-translocation (POST) complex to a pre-translocation (PRE) complex, thus giving elongation factor G a second chance to translocate the tRNAs correctly. Binds to ribosomes in a GTP-dependent manner. The protein is Elongation factor 4 of Mycoplasmopsis pulmonis (strain UAB CTIP) (Mycoplasma pulmonis).